Reading from the N-terminus, the 76-residue chain is MPVAPSNHCDNQCPHIFSKALVVSVAPSPPRDKPAPYTFTDVSSLCGLQKKCEGGKAMLFTLKRDRFSFLLFVSHC.

The protein is Ovarian cancer-related protein 1 (OCR1) of Homo sapiens (Human).